A 250-amino-acid chain; its full sequence is Coproheme decarboxylase (250 aa).

Residues arginine 131, 145–149 (YPMNK), histidine 172, and glutamine 185 contribute to the Fe-coproporphyrin III site. Tyrosine 145 is an active-site residue.

The protein belongs to the ChdC family. Type 1 subfamily. Fe-coproporphyrin III serves as cofactor.

It catalyses the reaction Fe-coproporphyrin III + 2 H2O2 + 2 H(+) = heme b + 2 CO2 + 4 H2O. It carries out the reaction Fe-coproporphyrin III + H2O2 + H(+) = harderoheme III + CO2 + 2 H2O. The enzyme catalyses harderoheme III + H2O2 + H(+) = heme b + CO2 + 2 H2O. Its pathway is porphyrin-containing compound metabolism; protoheme biosynthesis. Its function is as follows. Involved in coproporphyrin-dependent heme b biosynthesis. Catalyzes the decarboxylation of Fe-coproporphyrin III (coproheme) to heme b (protoheme IX), the last step of the pathway. The reaction occurs in a stepwise manner with a three-propionate intermediate. This Staphylococcus aureus (strain bovine RF122 / ET3-1) protein is Coproheme decarboxylase.